Here is a 231-residue protein sequence, read N- to C-terminus: MEAQAVPEGSGPSTASPRTAPPVTVLVMRQDEAEADGALRPGLAGSEAAADAEDEAGDDDADLLDTSDPAGGGESAASPEELEDEDAEGGGAARRRGSKTCTYEGCRETTSQVAKQRKPWMCKKHRNKMYKDKYKKKKSDQALGSGGPSAASTGNVKLEESTDNILSIVKQRTGSFGDRPARPTLLEQVLNQKRLSLLRSPEVVQFLQKQQQLLNQQVLEQRQQHFPGAPV.

Residues 1-163 form a disordered region; sequence MEAQAVPEGS…GNVKLEESTD (163 aa). Acidic residues predominate over residues 50 to 65; that stretch reads ADAEDEAGDDDADLLD. Positions 115–138 are enriched in basic residues; the sequence is KQRKPWMCKKHRNKMYKDKYKKKK. The short motif at 123–138 is the Nuclear localization signal element; the sequence is KKHRNKMYKDKYKKKK. Lysine 157 participates in a covalent cross-link: Glycyl lysine isopeptide (Lys-Gly) (interchain with G-Cter in SUMO2).

In terms of assembly, RFX consists of at least 3 different subunits; RFXAP, RFX5 and RFX-B/RFXANK; with each subunit representing a separate complementation group. RFX forms cooperative DNA binding complexes with X2BP and CBF/NF-Y. RFX associates with CIITA to form an active transcriptional complex. Phosphorylated.

It localises to the nucleus. Functionally, part of the RFX complex that binds to the X-box of MHC II promoters. The polypeptide is Regulatory factor X-associated protein (Rfxap) (Mus musculus (Mouse)).